The sequence spans 137 residues: Large ribosomal subunit protein uL13 (137 aa).

It belongs to the universal ribosomal protein uL13 family. Part of the 50S ribosomal subunit.

Functionally, this protein is one of the early assembly proteins of the 50S ribosomal subunit, although it is not seen to bind rRNA by itself. It is important during the early stages of 50S assembly. The chain is Large ribosomal subunit protein uL13 from Methanococcus maripaludis (strain DSM 14266 / JCM 13030 / NBRC 101832 / S2 / LL).